We begin with the raw amino-acid sequence, 187 residues long: Ribosome-recycling factor (187 aa).

This sequence belongs to the RRF family.

The protein resides in the cytoplasm. Functionally, responsible for the release of ribosomes from messenger RNA at the termination of protein biosynthesis. May increase the efficiency of translation by recycling ribosomes from one round of translation to another. This Methylobacterium radiotolerans (strain ATCC 27329 / DSM 1819 / JCM 2831 / NBRC 15690 / NCIMB 10815 / 0-1) protein is Ribosome-recycling factor.